The sequence spans 342 residues: Aquaporin-8 (342 aa).

Helical transmembrane passes span 55–75, 98–118, and 126–146; these read FLAVFVLMVFIEGSAATAIFT, VAGGVSGAFLNPAVALAFAVL, and CIFYMISQYLAAFVASCTMFA. The NPA 1 motif lies at 108–110; sequence NPA. Asn-166 is a glycosylation site (N-linked (GlcNAc...) asparagine). A run of 2 helical transmembrane segments spans residues 184-204 and 215-235; these read TAFADQVFCTAILLIVVLAMC and FLPIAIGLLIITISCTLSYNA. An NPA 2 motif is present at residues 240–242; the sequence is NPS. The chain crosses the membrane as a helical span at residues 266–286; that stretch reads YTWFFVPVLGSHCGAIIGGAI. Residues 302 to 327 show a composition bias toward polar residues; sequence TNSVSSMSYNEDNSTLTKRKQVSNIV. The tract at residues 302–342 is disordered; sequence TNSVSSMSYNEDNSTLTKRKQVSNIVHDSKGAKGSSTAPVN. Asn-314 is a glycosylation site (N-linked (GlcNAc...) asparagine).

Belongs to the MIP/aquaporin (TC 1.A.8) family.

It localises to the cell membrane. Aquaglyceroporin that may modulate the water content and osmolytes during anhydrobiosis. The polypeptide is Aquaporin-8 (Milnesium tardigradum (Water bear)).